Consider the following 217-residue polypeptide: Large ribosomal subunit protein uL3 (217 aa).

Residues 133–145 (GRASHGNSRSHNV) show a composition bias toward polar residues. A disordered region spans residues 133–153 (GRASHGNSRSHNVPGSIGMAQ). At Q153 the chain carries N5-methylglutamine.

This sequence belongs to the universal ribosomal protein uL3 family. Part of the 50S ribosomal subunit. Forms a cluster with proteins L14 and L19. In terms of processing, methylated by PrmB.

One of the primary rRNA binding proteins, it binds directly near the 3'-end of the 23S rRNA, where it nucleates assembly of the 50S subunit. This chain is Large ribosomal subunit protein uL3, found in Ralstonia pickettii (strain 12J).